The chain runs to 1113 residues: StAR-related lipid transfer protein 13 (1113 aa).

At M1 the chain carries N-acetylmethionine. Positions 55 to 122 (QQEIEAKEAC…LNKCASMKLD (68 aa)) constitute an SAM domain. 2 disordered regions span residues 162–254 (LLPR…PTRA) and 307–346 (PNGD…VSTP). A compositionally biased stretch (polar residues) spans 177 to 188 (MRNTTSSESVLT). Low complexity-rich tracts occupy residues 197–213 (SIHS…SQPG) and 326–344 (SGKS…SGVS). S411 is modified (phosphoserine). Residues 536–549 (FEGNSVSEGRTTPS) are compositionally biased toward polar residues. The interval 536-580 (FEGNSVSEGRTTPSDVERDVTSLNESEPPGVRDRRDSGVGASLTR) is disordered. The Rho-GAP domain occupies 663-868 (VPLIVHVQRT…HMIMECDRLF (206 aa)). Residues 899–1107 (LEESGATFHT…RNSFQPLIAE (209 aa)) enclose the START domain.

In terms of assembly, homodimer. Interacts with TAX1BP1. Ubiquitously expressed. Underexpressed in hepatocellular carcinoma cells and some breast cancer cell lines.

Its subcellular location is the cytoplasm. It is found in the membrane. The protein resides in the mitochondrion membrane. It localises to the lipid droplet. Functionally, GTPase-activating protein for RhoA, and perhaps for Cdc42. May be involved in regulation of cytoskeletal reorganization, cell proliferation and cell motility. Acts a tumor suppressor in hepatocellular carcinoma cells. This chain is StAR-related lipid transfer protein 13 (STARD13), found in Homo sapiens (Human).